The sequence spans 103 residues: MELIEQVAVAKKANIYFEGKVASRSVFFSDGSKQTLGVVLPGEYEFSTSQGEIMHVTSGSFEVLLPNSSTWQAFSEGSQFELAANVSFKIRNNAIAEYCCRYL.

It belongs to the nucleoside phosphorylase PpnP family.

It carries out the reaction a purine D-ribonucleoside + phosphate = a purine nucleobase + alpha-D-ribose 1-phosphate. The catalysed reaction is adenosine + phosphate = alpha-D-ribose 1-phosphate + adenine. It catalyses the reaction cytidine + phosphate = cytosine + alpha-D-ribose 1-phosphate. The enzyme catalyses guanosine + phosphate = alpha-D-ribose 1-phosphate + guanine. It carries out the reaction inosine + phosphate = alpha-D-ribose 1-phosphate + hypoxanthine. The catalysed reaction is thymidine + phosphate = 2-deoxy-alpha-D-ribose 1-phosphate + thymine. It catalyses the reaction uridine + phosphate = alpha-D-ribose 1-phosphate + uracil. The enzyme catalyses xanthosine + phosphate = alpha-D-ribose 1-phosphate + xanthine. In terms of biological role, catalyzes the phosphorolysis of diverse nucleosides, yielding D-ribose 1-phosphate and the respective free bases. Can use uridine, adenosine, guanosine, cytidine, thymidine, inosine and xanthosine as substrates. Also catalyzes the reverse reactions. The polypeptide is Pyrimidine/purine nucleoside phosphorylase (Shewanella oneidensis (strain ATCC 700550 / JCM 31522 / CIP 106686 / LMG 19005 / NCIMB 14063 / MR-1)).